A 194-amino-acid chain; its full sequence is Peptidyl-tRNA hydrolase (194 aa).

TRNA is bound at residue Tyr16. The active-site Proton acceptor is the His21. 3 residues coordinate tRNA: Phe67, Asn69, and Asn115.

This sequence belongs to the PTH family. Monomer.

The protein resides in the cytoplasm. It carries out the reaction an N-acyl-L-alpha-aminoacyl-tRNA + H2O = an N-acyl-L-amino acid + a tRNA + H(+). Its function is as follows. Hydrolyzes ribosome-free peptidyl-tRNAs (with 1 or more amino acids incorporated), which drop off the ribosome during protein synthesis, or as a result of ribosome stalling. In terms of biological role, catalyzes the release of premature peptidyl moieties from peptidyl-tRNA molecules trapped in stalled 50S ribosomal subunits, and thus maintains levels of free tRNAs and 50S ribosomes. The protein is Peptidyl-tRNA hydrolase of Klebsiella pneumoniae (strain 342).